Reading from the N-terminus, the 356-residue chain is Putative aminopeptidase FrvX (356 aa).

2 residues coordinate a divalent metal cation: His61 and Asp175. Glu205 functions as the Proton acceptor in the catalytic mechanism. Residues Glu206, Asp228, and His316 each contribute to the a divalent metal cation site.

It belongs to the peptidase M42 family. A divalent metal cation serves as cofactor.

The chain is Putative aminopeptidase FrvX (frvX) from Escherichia coli (strain K12).